The sequence spans 173 residues: Disulfide bond formation protein B (173 aa).

Residues 1–11 (MNALQWSFRAQ) are Cytoplasmic-facing. A helical membrane pass occupies residues 12 to 28 (CLTGFLFCTGLLAYAIF). Topologically, residues 29–46 (LQLHQGLEPCPLCIFQRI) are periplasmic. Cys38 and Cys41 are oxidised to a cystine. Residues 47-63 (AFAVLGILFLIAGLYNS) form a helical membrane-spanning segment. Over 64–70 (SNVYTRK) the chain is Cytoplasmic. A helical membrane pass occupies residues 71–88 (AYGLLIFLTAAIGTGIAG). Residues 89-145 (RHVWVQLMPHNTISSCGSPLSFLSETMGPFEVFRTVLTGTSDCGNIDWRFLGLSMPM) are Periplasmic-facing. The cysteines at positions 104 and 131 are disulfide-linked. A helical membrane pass occupies residues 146–164 (WSMFWFVALALLGLLVGFK). The Cytoplasmic portion of the chain corresponds to 165–173 (AERRKPLFS).

It belongs to the DsbB family.

The protein localises to the cell inner membrane. In terms of biological role, required for disulfide bond formation in some periplasmic proteins. Acts by oxidizing the DsbA protein. The sequence is that of Disulfide bond formation protein B from Xylella fastidiosa (strain 9a5c).